Consider the following 258-residue polypeptide: PF03932 family protein CutC (258 aa).

This sequence belongs to the CutC family.

It is found in the cytoplasm. This is PF03932 family protein CutC from Mesorhizobium japonicum (strain LMG 29417 / CECT 9101 / MAFF 303099) (Mesorhizobium loti (strain MAFF 303099)).